The following is a 413-amino-acid chain: Serine hydroxymethyltransferase (413 aa).

Residues leucine 118 and 122 to 124 (GHL) contribute to the (6S)-5,6,7,8-tetrahydrofolate site. At lysine 228 the chain carries N6-(pyridoxal phosphate)lysine.

Belongs to the SHMT family. In terms of assembly, homodimer. The cofactor is pyridoxal 5'-phosphate.

The protein resides in the cytoplasm. It catalyses the reaction (6R)-5,10-methylene-5,6,7,8-tetrahydrofolate + glycine + H2O = (6S)-5,6,7,8-tetrahydrofolate + L-serine. Its pathway is one-carbon metabolism; tetrahydrofolate interconversion. It participates in amino-acid biosynthesis; glycine biosynthesis; glycine from L-serine: step 1/1. Its function is as follows. Catalyzes the reversible interconversion of serine and glycine with tetrahydrofolate (THF) serving as the one-carbon carrier. This reaction serves as the major source of one-carbon groups required for the biosynthesis of purines, thymidylate, methionine, and other important biomolecules. Also exhibits THF-independent aldolase activity toward beta-hydroxyamino acids, producing glycine and aldehydes, via a retro-aldol mechanism. The chain is Serine hydroxymethyltransferase from Phytoplasma australiense.